A 460-amino-acid chain; its full sequence is Probable glucan endo-1,3-beta-glucosidase eglC (460 aa).

The signal sequence occupies residues 1–18 (MQLAQLAAFAMTLATSEA). The Proton donor role is filled by Glu128. An N-linked (GlcNAc...) asparagine glycan is attached at Asn183. Glu239 serves as the catalytic Nucleophile. N-linked (GlcNAc...) asparagine glycosylation is found at Asn312, Asn367, and Asn373. The disordered stretch occupies residues 379-437 (RPSGSASARPSAGAISSGSGSSSSGSGSSGSTGTSATSGQSSSSGSSAAAGSSSPAAFS). Residues 380–437 (PSGSASARPSAGAISSGSGSSSSGSGSSGSTGTSATSGQSSSSGSSAAAGSSSPAAFS) are compositionally biased toward low complexity. Residue Ser430 is the site of GPI-anchor amidated serine attachment. A propeptide spans 431–460 (SSPAAFSGASTLSGSLFGAVVAVFMTLAAL) (removed in mature form).

This sequence belongs to the glycosyl hydrolase 17 family. In terms of processing, the GPI-anchor is attached to the protein in the endoplasmic reticulum and serves to target the protein to the cell surface. There, the glucosamine-inositol phospholipid moiety is cleaved off and the GPI-modified mannoprotein is covalently attached via its lipidless GPI glycan remnant to the 1,6-beta-glucan of the outer cell wall layer.

It is found in the cell membrane. Its subcellular location is the secreted. The protein resides in the cell wall. It catalyses the reaction Hydrolysis of (1-&gt;3)-beta-D-glucosidic linkages in (1-&gt;3)-beta-D-glucans.. Its function is as follows. Glucanases play a role in cell expansion during growth, in cell-cell fusion during mating, and in spore release during sporulation. This enzyme may be involved in beta-glucan degradation and also function biosynthetically as a transglycosylase. This is Probable glucan endo-1,3-beta-glucosidase eglC (eglC) from Aspergillus niger (strain ATCC MYA-4892 / CBS 513.88 / FGSC A1513).